Reading from the N-terminus, the 269-residue chain is Sulfur carrier protein FdhD (269 aa).

C111 (cysteine persulfide intermediate) is an active-site residue.

It belongs to the FdhD family.

Its subcellular location is the cytoplasm. Its function is as follows. Required for formate dehydrogenase (FDH) activity. Acts as a sulfur carrier protein that transfers sulfur from IscS to the molybdenum cofactor prior to its insertion into FDH. This is Sulfur carrier protein FdhD from Brucella melitensis biotype 1 (strain ATCC 23456 / CCUG 17765 / NCTC 10094 / 16M).